The sequence spans 394 residues: ATP phosphoribosyltransferase regulatory subunit (394 aa).

The protein belongs to the class-II aminoacyl-tRNA synthetase family. HisZ subfamily. As to quaternary structure, heteromultimer composed of HisG and HisZ subunits.

The protein localises to the cytoplasm. Its pathway is amino-acid biosynthesis; L-histidine biosynthesis; L-histidine from 5-phospho-alpha-D-ribose 1-diphosphate: step 1/9. In terms of biological role, required for the first step of histidine biosynthesis. May allow the feedback regulation of ATP phosphoribosyltransferase activity by histidine. This Geobacillus thermodenitrificans (strain NG80-2) protein is ATP phosphoribosyltransferase regulatory subunit.